Reading from the N-terminus, the 547-residue chain is Glutamyl-tRNA(Gln) amidotransferase subunit B, mitochondrial (547 aa).

This sequence belongs to the GatB/GatE family. GatB subfamily. In terms of assembly, subunit of the heterotrimeric GatFAB amidotransferase (AdT) complex, composed of A, B and F subunits.

It localises to the mitochondrion. The enzyme catalyses L-glutamyl-tRNA(Gln) + L-glutamine + ATP + H2O = L-glutaminyl-tRNA(Gln) + L-glutamate + ADP + phosphate + H(+). In terms of biological role, allows the formation of correctly charged Gln-tRNA(Gln) through the transamidation of misacylated Glu-tRNA(Gln) in the mitochondria. The reaction takes place in the presence of glutamine and ATP through an activated gamma-phospho-Glu-tRNA(Gln). The chain is Glutamyl-tRNA(Gln) amidotransferase subunit B, mitochondrial from Lachancea thermotolerans (strain ATCC 56472 / CBS 6340 / NRRL Y-8284) (Yeast).